Consider the following 611-residue polypeptide: MSKVIGIDLGTTNSCVAVLEGDEPKVIQNPEGARTTPSVVAFKNGETQVGEVAKRQAITNPNTVQSIKRHMGTDYKVDIEGKSYTPQEISAMVLQNLKNTAESYLGDKVDKAVITVPAYFNDAERQATKDAGKIAGLEVERIINEPTAAALAYGLDKTDQDQKVLVFDLGGGTFDVSILELGDGVFEVLSTAGDNKLGGDDFDQVIIDYLVSEFKKENGVDLSQDKMALQRLKDAAEKAKKDLSGVSQTQISLPFISAGESGPLHLEISLTRSKFEELADSLIRRTMEPTRQALKDAGLSTSEIDEVILVGGSTRIPAVQEAVKKEIGKDPHKGVNPDEVVAMGAAIQGGVITGDVKDVVLLDVTPLSLGIEIMGGRMNTLIERNTTIPTSKSQVYSTAADNQPAVDIHVLQGERPMASDNKTLGRFQLTDIPPAPRGVPQIEVTFDIDKNGIVNVTAKDLGTNKEQNITIQSSSALSDEEIDRMVKDAEENAEADKKRREEVDLRNEADSLVFQVEKTITDLGDNISEEDKSNAESKKDALKSALEGQDIEDIKAKKEELEKVIQDLSAKVYQQAQQAQQQAQDGAQQTQNDSNVEDAEFKEVNDDEDKK.

T173 carries the phosphothreonine; by autocatalysis modification. 2 disordered regions span residues 525 to 548 and 573 to 611; these read DNISEEDKSNAESKKDALKSALEG and YQQAQQAQQQAQDGAQQTQNDSNVEDAEFKEVNDDEDKK. A compositionally biased stretch (basic and acidic residues) spans 529–542; the sequence is EEDKSNAESKKDAL. Residues 574–591 are compositionally biased toward low complexity; sequence QQAQQAQQQAQDGAQQTQ. A compositionally biased stretch (basic and acidic residues) spans 599–611; that stretch reads AEFKEVNDDEDKK.

Belongs to the heat shock protein 70 family.

In terms of biological role, acts as a chaperone. The chain is Chaperone protein DnaK from Staphylococcus haemolyticus (strain JCSC1435).